The following is a 796-amino-acid chain: Quinoprotein glucose dehydrogenase (796 aa).

The Cytoplasmic segment spans residues 1–10 (MAINNTGSRR). Residues 11–37 (LLVTLTALFAALCGLYLLIGGGWLVAI) form a helical membrane-spanning segment. Over 38-40 (GGS) the chain is Periplasmic. A helical membrane pass occupies residues 41 to 58 (WYYPIAGLVMLGVAWMLW). Residues 59–62 (RSKR) lie on the Cytoplasmic side of the membrane. Residues 63–81 (AALWLYAALLLGTMIWGVW) form a helical membrane-spanning segment. Topologically, residues 82 to 95 (EVGFDFWALTPRSD) are periplasmic. A helical transmembrane segment spans residues 96–110 (ILVFFGIWLILPFVW). At 111 to 118 (RRLVIPAS) the chain is on the cytoplasmic side. A helical membrane pass occupies residues 119–141 (GAVAALVVALLISGGILTWAGFN). Over 142–796 (DPQEINGTLS…VAYALPDDVK (655 aa)) the chain is Periplasmic. D466 serves as the catalytic Proton acceptor.

This sequence belongs to the bacterial PQQ dehydrogenase family. In terms of assembly, monomer. The cofactor is pyrroloquinoline quinone.

Its subcellular location is the cell inner membrane. The catalysed reaction is a ubiquinone + D-glucose = D-glucono-1,5-lactone + a ubiquinol. Its function is as follows. GDH is probably involved in energy conservation rather than in sugar metabolism. In Escherichia coli (strain K12), this protein is Quinoprotein glucose dehydrogenase (gcd).